A 555-amino-acid chain; its full sequence is 5'-nucleotidase-related protein (555 aa).

The first 25 residues, 1 to 25, serve as a signal peptide directing secretion; it reads MKSLIGTLGLYCLFILTNNVVSSYG. A divalent metal cation-binding residues include aspartate 38, histidine 40, and aspartate 91. The N-linked (GlcNAc...) asparagine glycan is linked to asparagine 105. Asparagine 123 contributes to the a divalent metal cation binding site. N-linked (GlcNAc...) asparagine glycosylation occurs at asparagine 198. A divalent metal cation-binding residues include histidine 225 and histidine 249. The N-linked (GlcNAc...) asparagine glycan is linked to asparagine 295. 3 residues coordinate AMP: arginine 358, arginine 402, and phenylalanine 421. N-linked (GlcNAc...) asparagine glycosylation is present at asparagine 465. Residues phenylalanine 505 and aspartate 511 each contribute to the AMP site.

Belongs to the 5'-nucleotidase family. Requires Mg(2+) as cofactor. It depends on Mn(2+) as a cofactor. As to expression, salivary gland (at protein level). Saliva (at protein level).

The protein resides in the secreted. The catalysed reaction is a ribonucleoside 5'-triphosphate + 2 H2O = a ribonucleoside 5'-phosphate + 2 phosphate + 2 H(+). Its activity is regulated as follows. DEPC (2 mM), sodium fluoride (10 mM) and 4,4'-Diisothiocyano-2,2'-stilbenedisulfonic acid (DIDS, 100 uM) nearly completely abrogate activity. Concanavalin A enhances activity. Facilitates hematophagy by inhibiting ADP-dependent platelet aggregation and promoting disaggregation of ADP-stimulated platelets in the host. Cleaves adenosine triphosphate (ATP) and adenosine diphosphate (ADP) to adenosine monophosphate (AMP) and inorganic phosphate. Interacts with fibrinogen receptor integrin alpha-IIb/beta-3 (ITGA2B/ITGB3). The protein is 5'-nucleotidase-related protein of Glossina morsitans morsitans (Savannah tsetse fly).